An 86-amino-acid polypeptide reads, in one-letter code: High affinity immunoglobulin epsilon receptor subunit gamma (86 aa).

A signal peptide spans 1-18 (MYPAVVLLLLLLVEQAAA). At 19 to 23 (LGEPQ) the chain is on the extracellular side. The chain crosses the membrane as a helical span at residues 24–44 (LCYILDAILFLYGIILTLLYC). The Cytoplasmic portion of the chain corresponds to 45–86 (RLKIQVRKATVASYEKPDGIYTGLSTRNQETYETLKHEKPPQ). Residues 54–82 (TVASYEKPDGIYTGLSTRNQETYETLKHE) form the ITAM domain. Y65 carries the post-translational modification Phosphotyrosine. A Phosphoserine modification is found at S69. Position 76 is a phosphotyrosine (Y76). Position 78 is a phosphothreonine (T78).

This sequence belongs to the CD3Z/FCER1G family. IgE Fc receptor is a tetramer of an alpha chain, a beta chain, and two disulfide linked gamma chains. Associates with FCGR1A; forms a functional signaling complex. The signaling subunit of immunoglobulin gamma (IgG) Fc receptor complex. As a homodimer or a heterodimer of CD247 and FCER1G, associates with the ligand binding subunit FCGR3A to form a functional receptor complex. Associates with CLEC6A. Interacts with CLEC4E. Interacts (via ITAM domain) with SYK (via SH2 domains); activates SYK, enabling integrin-mediated activation of neutrophils and macrophages. Interacts with CSF2RB and recruits SYK in response to IL3 stimulation; this interaction is direct. Interacts with CD300LH; the interaction may be indirect. Interacts with CD300LD. Interacts with TARM1.

It localises to the cell membrane. Functionally, adapter protein containing an immunoreceptor tyrosine-based activation motif (ITAM) that transduces activation signals from various immunoreceptors. As a component of the high-affinity immunoglobulin E (IgE) receptor, mediates allergic inflammatory signaling in mast cells. As a constitutive component of interleukin-3 receptor complex, selectively mediates interleukin 4/IL4 production by basophils priming T-cells toward effector T-helper 2 subset. Associates with pattern recognition receptors CLEC4D and CLEC4E to form a functional signaling complex in myeloid cells. Binding of mycobacterial trehalose 6,6'-dimycolate (TDM) to this receptor complex leads to phosphorylation of ITAM, triggering activation of SYK, CARD9 and NF-kappa-B, consequently driving maturation of antigen-presenting cells and shaping antigen-specific priming of T-cells toward effector T-helper 1 and T-helper 17 cell subtypes. May function cooperatively with other activating receptors. Functionally linked to integrin beta-2/ITGB2-mediated neutrophil activation. Also involved in integrin alpha-2/ITGA2-mediated platelet activation. The protein is High affinity immunoglobulin epsilon receptor subunit gamma (FCER1G) of Cavia porcellus (Guinea pig).